The following is a 326-amino-acid chain: Phosphotriesterase homology protein (326 aa).

Zn(2+)-binding residues include His-22, His-24, Lys-145, His-178, His-207, and Asp-264. Lys-145 is subject to N6-carboxylysine.

The protein belongs to the metallo-dependent hydrolases superfamily. Phosphotriesterase family. It depends on Zn(2+) as a cofactor.

This chain is Phosphotriesterase homology protein (php), found in Mycobacterium tuberculosis (strain CDC 1551 / Oshkosh).